The following is a 555-amino-acid chain: Perforin-1 (555 aa).

The first 21 residues, 1 to 21 (MAARLLLLGILLLLLPLPVPA), serve as a signal peptide directing secretion. 3 disulfide bridges follow: Cys23-Cys76, Cys31-Cys73, and Cys102-Cys176. The MACPF domain occupies 27-375 (ARSECKRSHK…QYLTDRARWR (349 aa)). A beta stranded transmembrane segment spans residues 129–149 (WKVGLDVTPKPTSNVHVSVAG). Residue Asn205 is glycosylated (N-linked (GlcNAc...) asparagine). 4 disulfides stabilise this stretch: Cys242–Cys408, Cys377–Cys393, Cys381–Cys395, and Cys397–Cys407. A beta stranded membrane pass occupies residues 257–279 (CLTVEAQVNIGIHGSISAEAKAC). Residues 376-408 (DCSRPCPPGRQKSPRDPCQCVCHGSAVTTQDCC) enclose the EGF-like domain. Residues 397–519 (CHGSAVTTQD…CNLNHGHLKF (123 aa)) form the C2 domain. Ca(2+)-binding residues include Gly429, Asp430, Thr433, Ala434, Asp436, Asp484, Asp486, Asp490, Asp491, and Asp492. Intrachain disulfides connect Cys497–Cys510 and Cys525–Cys534. Asn549 carries N-linked (GlcNAc...) asparagine glycosylation.

Belongs to the complement C6/C7/C8/C9 family. In terms of assembly, monomer, as soluble protein. Homooligomer; homooligomerizes to form a pore-forming ring. Ca(2+) is required as a cofactor. Post-translationally, N-glycosylated.

It localises to the cytolytic granule. Its subcellular location is the secreted. The protein resides in the cell membrane. The protein localises to the endosome lumen. Its function is as follows. Pore-forming protein that plays a key role in granzyme-mediated programmed cell death, and in defense against virus-infected or neoplastic cells. Plays an important role in killing other cells that are recognized as non-self by the immune system, e.g. in transplant rejection or some forms of autoimmune disease. Can insert into the membrane of target cells in its calcium-bound form, oligomerize and form large pores. Promotes cytolysis and apoptosis of target cells by mediating the passage and uptake of cytotoxic granzymes. Facilitates the delivery of cationic cargo protein, while anionic or neural proteins are not delivered efficiently. Perforin pores allow the release of mature caspase-7 (CASP7) into the extracellular milieu. This Homo sapiens (Human) protein is Perforin-1 (PRF1).